Consider the following 276-residue polypeptide: Acyl-[acyl-carrier-protein]--UDP-N-acetylglucosamine O-acyltransferase (276 aa).

Belongs to the transferase hexapeptide repeat family. LpxA subfamily. In terms of assembly, homotrimer.

It is found in the cytoplasm. It catalyses the reaction a (3R)-hydroxyacyl-[ACP] + UDP-N-acetyl-alpha-D-glucosamine = a UDP-3-O-[(3R)-3-hydroxyacyl]-N-acetyl-alpha-D-glucosamine + holo-[ACP]. The protein operates within glycolipid biosynthesis; lipid IV(A) biosynthesis; lipid IV(A) from (3R)-3-hydroxytetradecanoyl-[acyl-carrier-protein] and UDP-N-acetyl-alpha-D-glucosamine: step 1/6. In terms of biological role, involved in the biosynthesis of lipid A, a phosphorylated glycolipid that anchors the lipopolysaccharide to the outer membrane of the cell. This Synechocystis sp. (strain ATCC 27184 / PCC 6803 / Kazusa) protein is Acyl-[acyl-carrier-protein]--UDP-N-acetylglucosamine O-acyltransferase.